A 146-amino-acid chain; its full sequence is Hemoglobin subunit beta (146 aa).

At threonine 1 the chain carries Blocked amino end (Thr). The Globin domain maps to 2–146 (HWTAEERHYI…VAHALTLQYH (145 aa)). 2 residues coordinate heme b: histidine 63 and histidine 92.

It belongs to the globin family. In terms of assembly, heterotetramer of two alpha chains and two beta chains. Red blood cells.

Involved in oxygen transport from the lung to the various peripheral tissues. The polypeptide is Hemoglobin subunit beta (HBB) (Caretta caretta (Loggerhead sea turtle)).